A 114-amino-acid polypeptide reads, in one-letter code: Iron-sulfur cluster insertion protein ErpA (114 aa).

Iron-sulfur cluster is bound by residues Cys42, Cys106, and Cys108.

The protein belongs to the HesB/IscA family. Homodimer. Requires iron-sulfur cluster as cofactor.

Its function is as follows. Required for insertion of 4Fe-4S clusters for at least IspG. This Enterobacter sp. (strain 638) protein is Iron-sulfur cluster insertion protein ErpA.